The sequence spans 1576 residues: ABC transporter ALT5 (1576 aa).

A run of 10 helical transmembrane segments spans residues 27 to 47 (LKFELLFFATIPPAIFLILAV), 72 to 92 (ILGFVNLVLQVTLLVMTTQGT), 99 to 119 (GLFLSARIVTTSSTLLSVIVC), 267 to 287 (LPLSQALAKTLLLPLLLPILP), 289 to 309 (LVLIGLSISQAFLIQAVTGFL), 321 to 341 (GLIGATILIYVGIALSTSLYW), 387 to 407 (VLAGFLNLHELWASLIQAVIV), 417 to 437 (GFFALPVGLTVACFVALATVG), 500 to 520 (ITAMTLSLLPELIAPVITLAA), and 525 to 545 (VATSNIFTIVALISLLTAPLG). The ABC transmembrane type-1 1 domain maps to 289–556 (LVLIGLSISQ…LFQSVAPLMS (268 aa)). The ABC transporter 1 domain maps to 602-834 (FRVVNGSFRW…NGGYLQSLCV (233 aa)). 636–643 (GPVGSGKS) provides a ligand contact to ATP. 7 helical membrane-spanning segments follow: residues 915-935 (VVALVAFLASAICYGFFFAFP), 957-977 (FWVGIYGLFHALSLLGGFLTM), 981-1001 (VTSISLVSGASLHSSIFAAIM), 1035-1054 (LIQFVCDLAISLSMAGVLAA), 1060-1078 (AAMYPIAIALMYATVKLYL), 1142-1162 (WLLFILNIIVMFLAIFVVTLV), and 1171-1191 (GFAGSGLVMLLQFGQILASAM). The 281-residue stretch at 919 to 1199 (VAFLASAICY…AMQSYAKLET (281 aa)) folds into the ABC transmembrane type-1 2 domain. The region spanning 1236–1567 (IKLDGVSASY…SHSKFRALCE (332 aa)) is the ABC transporter 2 domain. ATP is bound at residue 1278 to 1285 (GRSGSGKS).

This sequence belongs to the ABC transporter superfamily. ABCC family. Conjugate transporter (TC 3.A.1.208) subfamily.

The protein localises to the cell membrane. ABC transporter that may provide the dual role AAL-toxin export and self-protection by allowing the fungus to evade the harmful effect of its own AAL-toxin production. This Alternaria alternata (Alternaria rot fungus) protein is ABC transporter ALT5.